We begin with the raw amino-acid sequence, 403 residues long: Phosphoglycerate kinase (403 aa).

Substrate contacts are provided by residues 22 to 24 (DLN), Arg37, 60 to 63 (HLGR), Arg119, and Arg156. ATP is bound by residues Lys206, Gly302, Glu333, and 359 to 362 (GGDS).

It belongs to the phosphoglycerate kinase family. As to quaternary structure, monomer.

The protein localises to the cytoplasm. It carries out the reaction (2R)-3-phosphoglycerate + ATP = (2R)-3-phospho-glyceroyl phosphate + ADP. Its pathway is carbohydrate degradation; glycolysis; pyruvate from D-glyceraldehyde 3-phosphate: step 2/5. This is Phosphoglycerate kinase from Streptomyces avermitilis (strain ATCC 31267 / DSM 46492 / JCM 5070 / NBRC 14893 / NCIMB 12804 / NRRL 8165 / MA-4680).